We begin with the raw amino-acid sequence, 462 residues long: Elongation factor 1-alpha 1 (462 aa).

A N,N,N-trimethylglycine modification is found at glycine 2. In terms of domain architecture, tr-type G spans 5-242; sequence KTHINIVVIG…DCILPPTRPT (238 aa). The interval 14–21 is G1; that stretch reads GHVDSGKS. Residue 14–21 participates in GTP binding; it reads GHVDSGKS. Position 36 is an N6,N6,N6-trimethyllysine; alternate (lysine 36). The residue at position 36 (lysine 36) is an N6,N6-dimethyllysine; alternate. Position 36 is an N6-methyllysine; alternate (lysine 36). Lysine 55 bears the N6,N6-dimethyllysine mark. A G2 region spans residues 70 to 74; it reads GITID. Residue lysine 79 is modified to N6,N6,N6-trimethyllysine; by EEF1AKMT1. The G3 stretch occupies residues 91–94; it reads DAPG. 153-156 provides a ligand contact to GTP; the sequence is NKMD. Positions 153–156 are G4; it reads NKMD. The residue at position 165 (lysine 165) is an N6,N6,N6-trimethyllysine; alternate; by EEF1AKMT3. Lysine 165 bears the N6,N6-dimethyllysine; alternate; by EEF1AKMT3 mark. N6-acetyllysine; alternate is present on lysine 165. Lysine 165 is subject to N6-methyllysine; alternate; by EEF1AKMT3. Lysine 172 carries the N6-acetyllysine modification. 194 to 196 contacts GTP; the sequence is SGW. A G5 region spans residues 194–196; sequence SGW. Lysine 273 carries the post-translational modification N6-acetyllysine. Serine 300 bears the Phosphoserine; by TGFBR1 mark. At glutamate 301 the chain carries 5-glutamyl glycerylphosphorylethanolamine. Residue lysine 318 is modified to N6,N6,N6-trimethyllysine; by EEF1AKMT2. Glutamate 374 carries the post-translational modification 5-glutamyl glycerylphosphorylethanolamine. A Glycyl lysine isopeptide (Lys-Gly) (interchain with G-Cter in ubiquitin) cross-link involves residue lysine 385. Lysine 392 carries the N6-acetyllysine; alternate modification. N6-succinyllysine; alternate is present on lysine 392. The residue at position 432 (threonine 432) is a Phosphothreonine; by PASK. Lysine 439 is modified (N6-acetyllysine).

The protein belongs to the TRAFAC class translation factor GTPase superfamily. Classic translation factor GTPase family. EF-Tu/EF-1A subfamily. As to quaternary structure, found in a nuclear export complex with XPO5, EEF1A1, Ran and aminoacylated tRNA. Interacts with PARP1 and TXK. Interacts with KARS1. May interact with ERGIC2. Interacts with IFIT1 (via TPR repeats 4-7). Interacts with DLC1, facilitating distribution to the membrane periphery and ruffles upon growth factor stimulation. Interacts with ZPR1; the interaction occurs in a epidermal growth factor (EGF)-dependent manner. Interacts with PPP1R16B. Interacts with SPHK1 and SPHK2; both interactions increase SPHK1 and SPHK2 kinase activity. Interacts with guanyl-nucleotide exchange factor EEF1B2. Interacts (via middle-region) with HTATIP2 (via N-terminus); the interaction is direct and competes with EEF1A1 binding to guanyl-nucleotide exchange factor EEF1B2, thereby inhibiting GDP for GTP exchange and reactivation of EEF1A1. Interacts with tRNA. Post-translationally, ISGylated. In terms of processing, phosphorylated by TXK. Phosphorylation by PASK increases translation efficiency. Phosphorylated by ROCK2. Phosphorylation by TGFBR1 inhibits translation elongation. Trimethylated at Lys-79 by EEF1AKMT1. Methylated at Lys-165 by EEF1AKMT3, methylation by EEF1AKMT3 is dynamic as well as inducible by stress conditions, such as ER-stress, and plays a regulatory role on mRNA translation. Trimethylated at Lys-318 by EEF1AKMT2. Mono-, di-, and trimethylated at Lys-36 by EEF1AKMT4; trimethylated form is predominant. Methylation by EEF1AKMT4 contributes to the fine-tuning of translation rates for a subset of tRNAs. Trimethylated at Gly-2 by METTL13. Mono- and dimethylated at Lys-55 by METTL13; dimethylated form is predominant. Post-translationally, ubiquitinated at Lys-385 by RNF14 in response to ribosome collisions (ribosome stalling), leading to its degradation by the proteasome and rescue of stalled ribosomes.

The protein resides in the cytoplasm. It localises to the nucleus. The protein localises to the nucleolus. It is found in the cell membrane. The catalysed reaction is GTP + H2O = GDP + phosphate + H(+). In terms of biological role, translation elongation factor that catalyzes the GTP-dependent binding of aminoacyl-tRNA (aa-tRNA) to the A-site of ribosomes during the elongation phase of protein synthesis. Base pairing between the mRNA codon and the aa-tRNA anticodon promotes GTP hydrolysis, releasing the aa-tRNA from EEF1A1 and allowing its accommodation into the ribosome. The growing protein chain is subsequently transferred from the P-site peptidyl tRNA to the A-site aa-tRNA, extending it by one amino acid through ribosome-catalyzed peptide bond formation. Also plays a role in the positive regulation of IFNG transcription in T-helper 1 cells as part of an IFNG promoter-binding complex with TXK and PARP1. Also plays a role in cytoskeleton organization by promoting actin bundling. The protein is Elongation factor 1-alpha 1 (EEF1A1) of Equus caballus (Horse).